A 424-amino-acid chain; its full sequence is D-inositol 3-phosphate glycosyltransferase (424 aa).

Histidine 20 contacts 1D-myo-inositol 3-phosphate. UDP-N-acetyl-alpha-D-glucosamine is bound by residues 26 to 27 (QP) and glycine 34. Residues 31–36 (DAGGMN), lysine 89, tyrosine 122, threonine 146, and arginine 166 each bind 1D-myo-inositol 3-phosphate. UDP-N-acetyl-alpha-D-glucosamine is bound by residues arginine 240, lysine 245, and methionine 306. Mg(2+)-binding residues include tyrosine 315, arginine 316, and alanine 318. UDP-N-acetyl-alpha-D-glucosamine contacts are provided by glutamate 328 and glutamate 336. Residue threonine 342 coordinates Mg(2+).

The protein belongs to the glycosyltransferase group 1 family. MshA subfamily. Homodimer.

It catalyses the reaction 1D-myo-inositol 3-phosphate + UDP-N-acetyl-alpha-D-glucosamine = 1D-myo-inositol 2-acetamido-2-deoxy-alpha-D-glucopyranoside 3-phosphate + UDP + H(+). In terms of biological role, catalyzes the transfer of a N-acetyl-glucosamine moiety to 1D-myo-inositol 3-phosphate to produce 1D-myo-inositol 2-acetamido-2-deoxy-glucopyranoside 3-phosphate in the mycothiol biosynthesis pathway. In Kribbella flavida (strain DSM 17836 / JCM 10339 / NBRC 14399), this protein is D-inositol 3-phosphate glycosyltransferase.